The following is a 338-amino-acid chain: Protein WVD2-like 2 (338 aa).

Residues 1–14 are compositionally biased toward basic and acidic residues; sequence MGRELVDKHMDKKA. The tract at residues 1–150 is disordered; that stretch reads MGRELVDKHM…SFSVASSSAT (150 aa). Composition is skewed to polar residues over residues 15-37 and 59-69; these read NSLT…STNE and QGITETPGSHK. The segment covering 100 to 115 has biased composition (low complexity); that stretch reads NNSLGNGASHNSSSAS. Positions 128–138 are enriched in basic and acidic residues; that stretch reads RIPDHKMHHDE. The stretch at 177–214 forms a coiled coil; it reads REFYQKLEEKQKALEAEKRENEKRLKEEQEAVTKQLRK. The interval 222-338 is disordered; the sequence is PVPSFYQEGP…GENGVGVVEE (117 aa). A compositionally biased stretch (polar residues) spans 288–300; the sequence is TNSVPRTPNSSSK.

This sequence belongs to the TPX2 family. In terms of tissue distribution, expressed in seedlings.

It localises to the cytoplasm. It is found in the cytoskeleton. Functionally, microtubule-associated protein (MAP) that regulates the orientation of interphase cortical microtubules. The sequence is that of Protein WVD2-like 2 from Arabidopsis thaliana (Mouse-ear cress).